A 147-amino-acid chain; its full sequence is MSNFTAEDKAAITSLWGKVNVEDAGGETLGRLLVVYPWTQRFFDSFGSLSSPSAIMGNPKVKAHGVKVLTSLGEAIKNLDDLKGTFGSLSELHCDKLHVDPENFRLLGNVLVTVLAILHGKEFTPEVQASWQKMVAGVASALASRYH.

One can recognise a Globin domain in the interval 3–147; it reads NFTAEDKAAI…VASALASRYH (145 aa). The heme b site is built by His-64 and His-93.

Belongs to the globin family. In terms of assembly, heterotetramer of two alpha chains and two gamma chains in fetal hemoglobin (Hb F). As to expression, red blood cells.

Gamma chains make up the fetal hemoglobin F, in combination with alpha chains. This chain is Hemoglobin subunit gamma (HBG), found in Alouatta belzebul (Red-handed howler monkey).